A 194-amino-acid polypeptide reads, in one-letter code: ATP-dependent Clp protease proteolytic subunit (194 aa).

Catalysis depends on Ser98, which acts as the Nucleophile. His123 is an active-site residue.

The protein belongs to the peptidase S14 family. Fourteen ClpP subunits assemble into 2 heptameric rings which stack back to back to give a disk-like structure with a central cavity, resembling the structure of eukaryotic proteasomes.

The protein localises to the cytoplasm. It catalyses the reaction Hydrolysis of proteins to small peptides in the presence of ATP and magnesium. alpha-casein is the usual test substrate. In the absence of ATP, only oligopeptides shorter than five residues are hydrolyzed (such as succinyl-Leu-Tyr-|-NHMec, and Leu-Tyr-Leu-|-Tyr-Trp, in which cleavage of the -Tyr-|-Leu- and -Tyr-|-Trp bonds also occurs).. Its function is as follows. Cleaves peptides in various proteins in a process that requires ATP hydrolysis. Has a chymotrypsin-like activity. Plays a major role in the degradation of misfolded proteins. In Clostridium kluyveri (strain NBRC 12016), this protein is ATP-dependent Clp protease proteolytic subunit.